The chain runs to 504 residues: Glycerol kinase (504 aa).

An ADP-binding site is contributed by threonine 14. The ATP site is built by threonine 14, threonine 15, and serine 16. Threonine 14 contacts sn-glycerol 3-phosphate. Arginine 18 provides a ligand contact to ADP. Arginine 84, glutamate 85, and tyrosine 136 together coordinate sn-glycerol 3-phosphate. Arginine 84, glutamate 85, and tyrosine 136 together coordinate glycerol. The residue at position 232 (histidine 232) is a Phosphohistidine; by HPr. Position 246 (aspartate 246) interacts with sn-glycerol 3-phosphate. Aspartate 246 and glutamine 247 together coordinate glycerol. Residues threonine 268 and glycine 311 each coordinate ADP. ATP contacts are provided by threonine 268, glycine 311, glutamine 315, and glycine 412. Positions 412 and 416 each coordinate ADP.

The protein belongs to the FGGY kinase family. As to quaternary structure, homotetramer and homodimer (in equilibrium). In terms of processing, the phosphoenolpyruvate-dependent sugar phosphotransferase system (PTS), including enzyme I, and histidine-containing protein (HPr) are required for the phosphorylation, which leads to the activation of the enzyme.

It carries out the reaction glycerol + ATP = sn-glycerol 3-phosphate + ADP + H(+). It participates in polyol metabolism; glycerol degradation via glycerol kinase pathway; sn-glycerol 3-phosphate from glycerol: step 1/1. With respect to regulation, activated by phosphorylation and inhibited by fructose 1,6-bisphosphate (FBP). Functionally, key enzyme in the regulation of glycerol uptake and metabolism. Catalyzes the phosphorylation of glycerol to yield sn-glycerol 3-phosphate. The protein is Glycerol kinase of Streptococcus pyogenes serotype M6 (strain ATCC BAA-946 / MGAS10394).